An 81-amino-acid chain; its full sequence is Beta-catenin-interacting protein 1 (81 aa).

Position 59 is a phosphoserine (Ser59).

The protein belongs to the CTNNBIP1 family. In terms of assembly, binds CTNNB1.

It is found in the cytoplasm. The protein localises to the nucleus. Functionally, prevents the interaction between CTNNB1 and TCF family members, and acts as a negative regulator of the Wnt signaling pathway. This is Beta-catenin-interacting protein 1 (CTNNBIP1) from Homo sapiens (Human).